Reading from the N-terminus, the 68-residue chain is Large ribosomal subunit protein uL29 (68 aa).

The protein belongs to the universal ribosomal protein uL29 family.

This chain is Large ribosomal subunit protein uL29, found in Wigglesworthia glossinidia brevipalpis.